The chain runs to 489 residues: FAD-linked oxidoreductase tazG (489 aa).

The N-terminal stretch at 1 to 17 (MVAFSAILQTALGLSAA) is a signal peptide. The N-linked (GlcNAc...) asparagine glycan is linked to Asn38. Positions 55 to 224 (APSYGAGAIK…TSATYRLPEV (170 aa)) constitute an FAD-binding PCMH-type domain. 2 N-linked (GlcNAc...) asparagine glycosylation sites follow: Asn242 and Asn306.

The protein belongs to the oxygen-dependent FAD-linked oxidoreductase family. FAD is required as a cofactor.

The protein operates within secondary metabolite biosynthesis. In terms of biological role, FAD-linked oxidoreductase; part of the gene cluster that mediates the biosynthesis of azaterrilone A and other azaphilones, a class of fungal metabolites characterized by a highly oxygenated pyrano-quinone bicyclic core and exhibiting a broad range of bioactivities. The first step of the pathway begins with the non-reducing polyketide synthase tazA that assembles one acetyl-CoA starter unit, five malonyl-CoA units, and catalyzes a series of Claisen condensations, methylation, PT-mediated cyclization, and finally releases the first hexaketide precursor through the R-domain. The tazA product then undergoes reduction on its terminal ketone and the following pyran-ring formation by yet undetermined enzyme(s). Dehydration and enoyl reduction, possibly involving the trans-enoyl reductase tazE leads to the next intermediate. TazD is predicted as an acetyltransferase and might catalyze the acetylation steps leading to the synthesis of azaterrilone A. Azaterrilone A is not the final product of the taz pathway and both the highly reducing polyketide synthase tazB and the dual enzyme tazHJ catalyze late steps of the pathway, leading to the production of the 2 final stereoisomers that contain additional polyketide modification whose structures have still to be determined. The sequence is that of FAD-linked oxidoreductase tazG from Aspergillus terreus (strain NIH 2624 / FGSC A1156).